The following is a 302-amino-acid chain: MTLPPLSHLDRLEAESIHILREVAAEFRAPVMLYSVGKDSSVLLHLLLKAFAPSRPPIPLLHIDTRWKFREMIAFRDRRAAETGVDLRVHINPDGVAQDVSPISHGAAVHTDIMKTQGLKQALEQGGFDAAIGGARRDEEKSRAKERVFSFRNARHRWDPKNQRPELWNLYNARTKPGESVRVFPLSNWTELDVWLYIYREKIPVVPLYFAAPRPVVARDGAWIMVDDARLPLHPGETPQLRSVRFRTLGCYPLTGAIESSADTLEAVIAEMLVSTSSERQGRMIDHAPGASMEQKKVEGYF.

It belongs to the PAPS reductase family. CysD subfamily. As to quaternary structure, heterodimer composed of CysD, the smaller subunit, and CysN.

The catalysed reaction is sulfate + ATP + H(+) = adenosine 5'-phosphosulfate + diphosphate. Its pathway is sulfur metabolism; hydrogen sulfide biosynthesis; sulfite from sulfate: step 1/3. With CysN forms the ATP sulfurylase (ATPS) that catalyzes the adenylation of sulfate producing adenosine 5'-phosphosulfate (APS) and diphosphate, the first enzymatic step in sulfur assimilation pathway. APS synthesis involves the formation of a high-energy phosphoric-sulfuric acid anhydride bond driven by GTP hydrolysis by CysN coupled to ATP hydrolysis by CysD. This chain is Sulfate adenylyltransferase subunit 2, found in Xanthomonas oryzae pv. oryzae (strain MAFF 311018).